Here is a 3391-residue protein sequence, read N- to C-terminus: Genome polyprotein (3391 aa).

Residues 1 to 15 (MNNQRKKARSTPFNM) form an interaction with host EXOC1 region. Over 1-101 (MNNQRKKARS…LNILNRRRRT (101 aa)) the chain is Cytoplasmic. The segment at 37–72 (MLQGRGPLKLFMALVAFLRFLTIPPTAGILKRWGTI) is hydrophobic; homodimerization of capsid protein C. The propeptide at 101-114 (TAGVIIMLIPTAMA) is ER anchor for the capsid protein C, removed in mature form by serine protease NS3. The chain crosses the membrane as a helical span at residues 102 to 119 (AGVIIMLIPTAMAFHLTT). Residues 120–241 (RNGEPHMIVG…KHVQRIETWI (122 aa)) are Extracellular-facing. N-linked (GlcNAc...) asparagine; by host glycosylation occurs at asparagine 183. The chain crosses the membrane as a helical span at residues 242–259 (LRHPGFTIMAAILAYTIG). Residues 260–265 (TTHFQR) are Cytoplasmic-facing. Residues 266-280 (ALIFILLTAVAPSMT) form a helical membrane-spanning segment. Over 281–725 (MRCIGISNRD…LHQVFGAIYG (445 aa)) the chain is Extracellular. Cystine bridges form between cysteine 283–cysteine 310, cysteine 340–cysteine 401, cysteine 354–cysteine 385, and cysteine 372–cysteine 396. N-linked (GlcNAc...) asparagine; by host glycosylation occurs at asparagine 347. The fusion peptide stretch occupies residues 378–391 (DRGWGNGCGLFGKG). An N-linked (GlcNAc...) asparagine; by host glycan is attached at asparagine 433. Cystine bridges form between cysteine 465/cysteine 565 and cysteine 582/cysteine 613. The helical transmembrane segment at 726–746 (AAFSGVSWTMKILIGVIITWI) threads the bilayer. Residues 747 to 752 (GMNSRS) lie on the Cytoplasmic side of the membrane. The helical transmembrane segment at 753–773 (TSLSVSLVLVGVVTLYLGAMV) threads the bilayer. Residues 774–1195 (QADSGCVVSW…MVGATMTDDI (422 aa)) lie on the Extracellular side of the membrane. Disulfide bonds link cysteine 779–cysteine 790, cysteine 830–cysteine 918, cysteine 954–cysteine 998, cysteine 1055–cysteine 1104, cysteine 1066–cysteine 1088, and cysteine 1087–cysteine 1091. N-linked (GlcNAc...) asparagine; by host glycans are attached at residues asparagine 905 and asparagine 982. N-linked (GlcNAc...) asparagine; by host glycosylation occurs at asparagine 1134. The chain crosses the membrane as a helical span at residues 1196-1220 (GMGVTYLALLAAFKVRPTFAAGLLL). Residues 1221–1226 (RKLTSK) lie on the Cytoplasmic side of the membrane. A helical transmembrane segment spans residues 1227 to 1245 (ELMMATIGIALLSQSTIPE). Residues 1246-1269 (TILELTDALALGMMVLKIVRNMEK) lie on the Lumenal side of the membrane. A helical transmembrane segment spans residues 1270 to 1290 (YQLAVTIMAILCVPNAVILQN). Residue alanine 1291 is a topological domain, cytoplasmic. The helical transmembrane segment at 1292–1310 (WKVSCTILAAVSVSPLLLT) threads the bilayer. Residues 1311–1317 (SSQQKAD) are Lumenal-facing. A helical transmembrane segment spans residues 1318–1338 (WIPLALTIKGLNPTAIFLTTL). The Cytoplasmic portion of the chain corresponds to 1339–1346 (SRTSKKRS). The helical transmembrane segment at 1347–1367 (WPLNEAIMAVGMVSILASSLL) threads the bilayer. The Lumenal segment spans residues 1368–1370 (KND). The chain crosses the membrane as a helical span at residues 1371 to 1391 (IPMTGPLVAGGLLTVCYVLTG). Topologically, residues 1392-1447 (RSADLELERAADVKWEDQAEISGSSPILSITISEDGSMSIKNEEEEQTLTILIRTG) are cytoplasmic. The segment at 1398-1437 (LERAADVKWEDQAEISGSSPILSITISEDGSMSIKNEEEE) is interacts with and activates NS3 protease. The segment at residues 1448–1468 (LLVISGVFPVSIPITAAAWYL) is an intramembrane region (helical). The Cytoplasmic segment spans residues 1469-2147 (WEVKKQRAGV…LSELPETLET (679 aa)). The Peptidase S7 domain occupies 1476–1653 (AGVLWDVPSP…EKSIEDNPEI (178 aa)). Residues histidine 1526, aspartate 1550, and serine 1610 each act as charge relay system; for serine protease NS3 activity in the active site. The region spanning 1655–1811 (DDIFRKKRLT…QSNAPIMDEE (157 aa)) is the Helicase ATP-binding domain. The tract at residues 1659–1662 (RKKR) is important for RNA-binding. ATP is bound at residue 1668–1675 (LHPGAGKT). The DEAH box signature appears at 1759 to 1762 (DEAH). Positions 1821–1988 (SGHEWVTDFK…IIPSMFEPER (168 aa)) constitute a Helicase C-terminal domain. Lysine 1863 carries the N6-acetyllysine; by host modification. The helical transmembrane segment at 2148 to 2168 (LLLLTLLATVTGGIFLFLMSG) threads the bilayer. Topologically, residues 2169 to 2170 (KG) are lumenal. An intramembrane region (helical) is located at residues 2171 to 2191 (IGKMTLGMCCIITASILLWYA). Position 2192 (glutamine 2192) is a topological domain, lumenal. The helical transmembrane segment at 2193–2213 (IQPHWIAASIILEFFLIVLLI) threads the bilayer. Topologically, residues 2214 to 2228 (PEPEKQRTPQDNQLT) are cytoplasmic. The chain crosses the membrane as a helical span at residues 2229 to 2249 (YVVIAILTVVAATMANEMGFL). The Lumenal segment spans residues 2250 to 2274 (EKTKKDLGLGSITTQESESNILDID). The helical intramembrane region spans 2275–2295 (LRPASAWTLYAVATTFVTPML). The Lumenal segment spans residues 2296-2316 (RHSIENSSVNVSLTAIANQAT). Residues asparagine 2301 and asparagine 2305 are each glycosylated (N-linked (GlcNAc...) asparagine; by host). The segment at residues 2317–2337 (VLMGLGKGWPLSKIHIGVPLL) is an intramembrane region (helical). The Lumenal portion of the chain corresponds to 2338-2347 (AIGCYSQVNP). The chain crosses the membrane as a helical span at residues 2348-2368 (ITLTAALLLLVAHYAIIGPGL). The Cytoplasmic segment spans residues 2369-2413 (QAKATREAQKRAAAGIMKNPTVDGITVIDLDPIPYDPKFEKQLGQ). Residues 2414-2434 (VMLLILCVTQVLMMRTTWALC) form a helical membrane-spanning segment. Topologically, residues 2435 to 2459 (EALTLATGPISTLWEGNPGRFWNTT) are lumenal. Residue asparagine 2457 is glycosylated (N-linked (GlcNAc...) asparagine; by host). A helical membrane pass occupies residues 2460–2480 (IAVSMANIFRGSYLAGAGLLF). Over 2481 to 3391 (SIMKNTTNTR…REEEEAGVLW (911 aa)) the chain is Cytoplasmic. One can recognise an mRNA cap 0-1 NS5-type MT domain in the interval 2493-2755 (TGNIGETLGE…DVDLGSGTRN (263 aa)). Position 2547 (serine 2547) interacts with S-adenosyl-L-methionine. The residue at position 2547 (serine 2547) is a Phosphoserine. The For 2'-O-MTase activity role is filled by lysine 2552. The SUMO-interacting motif signature appears at 2568–2571 (VVDL). Glycine 2577, tryptophan 2578, threonine 2595, lysine 2596, aspartate 2622, and valine 2623 together coordinate S-adenosyl-L-methionine. Residue aspartate 2637 is the For 2'-O-MTase activity of the active site. Residue isoleucine 2638 participates in S-adenosyl-L-methionine binding. Residues lysine 2672 and glutamate 2708 each act as for 2'-O-MTase activity in the active site. Tyrosine 2710 is an S-adenosyl-L-methionine binding site. Zn(2+) is bound by residues glutamate 2929, histidine 2933, cysteine 2938, and cysteine 2941. One can recognise a RdRp catalytic domain in the interval 3020–3169 (AMYADDTAGW…PLDDRFASAL (150 aa)). Histidine 3203, cysteine 3219, and cysteine 3338 together coordinate Zn(2+).

The protein in the N-terminal section; belongs to the class I-like SAM-binding methyltransferase superfamily. mRNA cap 0-1 NS5-type methyltransferase family. Homodimer. Interacts (via N-terminus) with host EXOC1 (via C-terminus); this interaction results in EXOC1 degradation through the proteasome degradation pathway. In terms of assembly, forms heterodimers with envelope protein E in the endoplasmic reticulum and Golgi. As to quaternary structure, homodimer; in the endoplasmic reticulum and Golgi. Interacts with protein prM. Interacts with non-structural protein 1. Homodimer; Homohexamer when secreted. Interacts with envelope protein E. Interacts with host PRKAA1. In terms of assembly, interacts (via N-terminus) with serine protease NS3. As to quaternary structure, forms a heterodimer with serine protease NS3. May form homooligomers. Forms a heterodimer with NS2B. Interacts with NS4B. Interacts with unphosphorylated RNA-directed RNA polymerase NS5; this interaction stimulates RNA-directed RNA polymerase NS5 guanylyltransferase activity. Interacts with host SHFL. In terms of assembly, interacts with host MAVS; this interaction inhibits the synthesis of IFN-beta. Interacts with host SHFL. Interacts with host AUP1; the interaction occurs in the presence of Dengue virus NS4B and induces lipophagy which facilitates production of virus progeny particles. May interact with host SRPRA and SEC61G. As to quaternary structure, interacts with serine protease NS3. Homodimer. Interacts with host STAT2; this interaction inhibits the phosphorylation of the latter, and, when all viral proteins are present (polyprotein), targets STAT2 for degradation. Interacts with serine protease NS3. Interacts with host PAF1 complex; the interaction may prevent the recruitment of the PAF1 complex to interferon-responsive genes, and thus reduces the immune response. Post-translationally, specific enzymatic cleavages in vivo yield mature proteins. Cleavages in the lumen of endoplasmic reticulum are performed by host signal peptidase, whereas cleavages in the cytoplasmic side are performed by serine protease NS3. Signal cleavage at the 2K-4B site requires a prior NS3 protease-mediated cleavage at the 4A-2K site. In terms of processing, cleaved in post-Golgi vesicles by a host furin, releasing the mature small envelope protein M, and peptide pr. This cleavage is incomplete as up to 30% of viral particles still carry uncleaved prM. N-glycosylated. Post-translationally, N-glycosylated. The excreted form is glycosylated and this is required for efficient secretion of the protein from infected cells. In terms of processing, acetylated by host KAT5. Acetylation modulates NS3 RNA-binding and unwinding activities and plays an important positive role for viral replication. Sumoylation of RNA-directed RNA polymerase NS5 increases NS5 protein stability allowing proper viral RNA replication. Post-translationally, phosphorylated on serines residues. This phosphorylation may trigger NS5 nuclear localization.

The protein resides in the virion. It is found in the host nucleus. Its subcellular location is the host cytoplasm. The protein localises to the host perinuclear region. It localises to the secreted. The protein resides in the virion membrane. It is found in the host endoplasmic reticulum membrane. Its subcellular location is the host mitochondrion. The enzyme catalyses Selective hydrolysis of -Xaa-Xaa-|-Yaa- bonds in which each of the Xaa can be either Arg or Lys and Yaa can be either Ser or Ala.. It catalyses the reaction RNA(n) + a ribonucleoside 5'-triphosphate = RNA(n+1) + diphosphate. It carries out the reaction a ribonucleoside 5'-triphosphate + H2O = a ribonucleoside 5'-diphosphate + phosphate + H(+). The catalysed reaction is ATP + H2O = ADP + phosphate + H(+). The enzyme catalyses a 5'-end (5'-triphosphoguanosine)-ribonucleoside in mRNA + S-adenosyl-L-methionine = a 5'-end (N(7)-methyl 5'-triphosphoguanosine)-ribonucleoside in mRNA + S-adenosyl-L-homocysteine. It catalyses the reaction a 5'-end (N(7)-methyl 5'-triphosphoguanosine)-ribonucleoside in mRNA + S-adenosyl-L-methionine = a 5'-end (N(7)-methyl 5'-triphosphoguanosine)-(2'-O-methyl-ribonucleoside) in mRNA + S-adenosyl-L-homocysteine + H(+). Its function is as follows. Plays a role in virus budding by binding to the cell membrane and gathering the viral RNA into a nucleocapsid that forms the core of a mature virus particle. During virus entry, may induce genome penetration into the host cytoplasm after hemifusion induced by the surface proteins. Can migrate to the cell nucleus where it modulates host functions. Overcomes the anti-viral effects of host EXOC1 by sequestering and degrading the latter through the proteasome degradation pathway. Functionally, inhibits RNA silencing by interfering with host Dicer. In terms of biological role, prevents premature fusion activity of envelope proteins in trans-Golgi by binding to envelope protein E at pH6.0. After virion release in extracellular space, gets dissociated from E dimers. Acts as a chaperone for envelope protein E during intracellular virion assembly by masking and inactivating envelope protein E fusion peptide. prM is the only viral peptide matured by host furin in the trans-Golgi network probably to avoid catastrophic activation of the viral fusion activity in acidic Golgi compartment prior to virion release. prM-E cleavage is inefficient, and many virions are only partially matured. These uncleaved prM would play a role in immune evasion. Its function is as follows. May play a role in virus budding. Exerts cytotoxic effects by activating a mitochondrial apoptotic pathway through M ectodomain. May display a viroporin activity. Functionally, binds to host cell surface receptor and mediates fusion between viral and cellular membranes. Envelope protein is synthesized in the endoplasmic reticulum in the form of heterodimer with protein prM. They play a role in virion budding in the ER, and the newly formed immature particle is covered with 60 spikes composed of heterodimer between precursor prM and envelope protein E. The virion is transported to the Golgi apparatus where the low pH causes dissociation of PrM-E heterodimers and formation of E homodimers. prM-E cleavage is inefficient, and many virions are only partially matured. These uncleaved prM would play a role in immune evasion. In terms of biological role, involved in immune evasion, pathogenesis and viral replication. Once cleaved off the polyprotein, is targeted to three destinations: the viral replication cycle, the plasma membrane and the extracellular compartment. Essential for viral replication. Required for formation of the replication complex and recruitment of other non-structural proteins to the ER-derived membrane structures. Excreted as a hexameric lipoparticle that plays a role against host immune response. Antagonizing the complement function. Binds to the host macrophages and dendritic cells. Inhibits signal transduction originating from Toll-like receptor 3 (TLR3). Involved in immune evasion, pathogenesis and viral replication. Once cleaved off the polyprotein, is targeted to three destinations: the viral replication cycle, the plasma membrane and the extracellular compartment. Essential for viral replication. Required for formation of the replication complex and recruitment of other non-structural proteins to the ER-derived membrane structures. Excreted as a hexameric lipoparticle that plays a role against host immune response. Antagonizing the complement function. Binds to the host macrophages and dendritic cells. Inhibits signal transduction originating from Toll-like receptor 3 (TLR3). Mediates complement activation, which may contribute to the pathogenesis of the vascular leakage that occurs in severe dengue disease. Activates autophagy through the AMPK/ERK/mTOR signaling pathway. Mechanistically, acts as the assembly platform for STK11-AMPK interactions and promotes STK11-AMPK interactions. In turn, promotes phosphorylation of the AMPK kinase structural domain and activates AMPK, thereby positively regulating the AMPK/ERK/mTOR signaling pathway and inducing autophagy. Its function is as follows. Component of the viral RNA replication complex that functions in virion assembly and antagonizes the host immune response. Functionally, required cofactor for the serine protease function of NS3. May have membrane-destabilizing activity and form viroporins. In terms of biological role, displays three enzymatic activities: serine protease, NTPase and RNA helicase. NS3 serine protease, in association with NS2B, performs its autocleavage and cleaves the polyprotein at dibasic sites in the cytoplasm: C-prM, NS2A-NS2B, NS2B-NS3, NS3-NS4A, NS4A-2K and NS4B-NS5. NS3 RNA helicase binds RNA and unwinds dsRNA in the 3' to 5' direction. Regulates the ATPase activity of the NS3 helicase activity. NS4A allows NS3 helicase to conserve energy during unwinding. Plays a role in the inhibition of the host innate immune response. Interacts with host MAVS and thereby prevents the interaction between RIGI and MAVS. In turn, IFN-beta production is impaired. Interacts with host AUP1 which mediates induction of lipophagy in host cells and facilitates production of virus progeny particles. Its function is as follows. Functions as a signal peptide for NS4B and is required for the interferon antagonism activity of the latter. Functionally, induces the formation of ER-derived membrane vesicles where the viral replication takes place. Inhibits interferon (IFN)-induced host STAT1 phosphorylation and nuclear translocation, thereby preventing the establishment of cellular antiviral state by blocking the IFN-alpha/beta pathway. In terms of biological role, replicates the viral (+) and (-) RNA genome, and performs the capping of genomes in the cytoplasm. NS5 methylates viral RNA cap at guanine N-7 and ribose 2'-O positions. Besides its role in RNA genome replication, also prevents the establishment of cellular antiviral state by blocking the interferon-alpha/beta (IFN-alpha/beta) signaling pathway. Inhibits host TYK2 and STAT2 phosphorylation, thereby preventing activation of JAK-STAT signaling pathway. May reduce immune responses by preventing the recruitment of the host PAF1 complex to interferon-responsive genes. This chain is Genome polyprotein, found in Dengue virus type 2 (strain Jamaica/1409/1983) (DENV-2).